The primary structure comprises 178 residues: Putative pre-16S rRNA nuclease (178 aa).

Residues 1-18 are compositionally biased toward basic and acidic residues; sequence MDHAEQGPDRPGVDDPGR. A disordered region spans residues 1–21; that stretch reads MDHAEQGPDRPGVDDPGRGRR.

The protein belongs to the YqgF nuclease family.

The protein localises to the cytoplasm. Its function is as follows. Could be a nuclease involved in processing of the 5'-end of pre-16S rRNA. The chain is Putative pre-16S rRNA nuclease from Rhodococcus jostii (strain RHA1).